A 565-amino-acid polypeptide reads, in one-letter code: NAD-dependent malic enzyme (565 aa).

The Proton donor role is filled by Y104. R157 contributes to the NAD(+) binding site. K175 serves as the catalytic Proton acceptor. A divalent metal cation-binding residues include E246, D247, and D270. Positions 270 and 418 each coordinate NAD(+).

Belongs to the malic enzymes family. As to quaternary structure, homotetramer. Requires Mg(2+) as cofactor. Mn(2+) serves as cofactor.

It carries out the reaction (S)-malate + NAD(+) = pyruvate + CO2 + NADH. The catalysed reaction is oxaloacetate + H(+) = pyruvate + CO2. The protein is NAD-dependent malic enzyme of Salmonella arizonae (strain ATCC BAA-731 / CDC346-86 / RSK2980).